The primary structure comprises 159 residues: NADH-quinone oxidoreductase subunit B (159 aa).

C36, C37, C102, and C132 together coordinate [4Fe-4S] cluster.

The protein belongs to the complex I 20 kDa subunit family. NDH-1 is composed of 14 different subunits. Subunits NuoB, C, D, E, F, and G constitute the peripheral sector of the complex. The cofactor is [4Fe-4S] cluster.

It localises to the cell inner membrane. It carries out the reaction a quinone + NADH + 5 H(+)(in) = a quinol + NAD(+) + 4 H(+)(out). In terms of biological role, NDH-1 shuttles electrons from NADH, via FMN and iron-sulfur (Fe-S) centers, to quinones in the respiratory chain. Couples the redox reaction to proton translocation (for every two electrons transferred, four hydrogen ions are translocated across the cytoplasmic membrane), and thus conserves the redox energy in a proton gradient. This chain is NADH-quinone oxidoreductase subunit B, found in Paracidovorax citrulli (strain AAC00-1) (Acidovorax citrulli).